A 251-amino-acid chain; its full sequence is uncharacterized protein (251 aa).

The region spanning 4–152 (IEITKDNIED…YFQLMALTWN (149 aa)) is the N-acetyltransferase domain.

Belongs to the acetyltransferase family.

This is an uncharacterized protein from Bacillus subtilis (strain 168).